Here is a 184-residue protein sequence, read N- to C-terminus: Protein N-terminal glutamine amidohydrolase (184 aa).

Active-site residues include Cys14, His63, and Asp78.

The protein belongs to the NTAQ1 family. Monomer.

It catalyses the reaction N-terminal L-glutaminyl-[protein] + H2O = N-terminal L-glutamyl-[protein] + NH4(+). In terms of biological role, mediates the side-chain deamidation of N-terminal glutamine residues to glutamate, an important step in N-end rule pathway of protein degradation. Conversion of the resulting N-terminal glutamine to glutamate renders the protein susceptible to arginylation, polyubiquitination and degradation as specified by the N-end rule. Does not act on substrates with internal or C-terminal glutamine and does not act on non-glutamine residues in any position. The chain is Protein N-terminal glutamine amidohydrolase from Caenorhabditis elegans.